Consider the following 206-residue polypeptide: Phosphoheptose isomerase (206 aa).

An SIS domain is found at 37–195 (LVDAFKAGKK…IEQKMDINNE (159 aa)). Position 52-54 (52-54 (NGG)) interacts with substrate. The Zn(2+) site is built by His-61 and Glu-65. Residues Glu-65, 93–94 (ND), 119–121 (STS), Ser-124, and Gln-172 each bind substrate. 2 residues coordinate Zn(2+): Gln-172 and His-180.

The protein belongs to the SIS family. GmhA subfamily. As to quaternary structure, homotetramer. Zn(2+) is required as a cofactor.

It localises to the cytoplasm. It carries out the reaction 2 D-sedoheptulose 7-phosphate = D-glycero-alpha-D-manno-heptose 7-phosphate + D-glycero-beta-D-manno-heptose 7-phosphate. It functions in the pathway carbohydrate biosynthesis; D-glycero-D-manno-heptose 7-phosphate biosynthesis; D-glycero-alpha-D-manno-heptose 7-phosphate and D-glycero-beta-D-manno-heptose 7-phosphate from sedoheptulose 7-phosphate: step 1/1. Functionally, catalyzes the isomerization of sedoheptulose 7-phosphate in D-glycero-D-manno-heptose 7-phosphate. The polypeptide is Phosphoheptose isomerase (Hamiltonella defensa subsp. Acyrthosiphon pisum (strain 5AT)).